We begin with the raw amino-acid sequence, 554 residues long: Glucose-6-phosphate isomerase (554 aa).

Glu359 acts as the Proton donor in catalysis. Catalysis depends on residues His390 and Lys518.

It belongs to the GPI family.

It is found in the cytoplasm. The catalysed reaction is alpha-D-glucose 6-phosphate = beta-D-fructose 6-phosphate. The protein operates within carbohydrate biosynthesis; gluconeogenesis. Its pathway is carbohydrate degradation; glycolysis; D-glyceraldehyde 3-phosphate and glycerone phosphate from D-glucose: step 2/4. Catalyzes the reversible isomerization of glucose-6-phosphate to fructose-6-phosphate. This Pseudomonas fluorescens (strain SBW25) protein is Glucose-6-phosphate isomerase.